The sequence spans 969 residues: Leucine--tRNA ligase (969 aa).

The short motif at 46–56 (PYLNGVLHAGH) is the 'HIGH' region element. The 'KMSKS' region signature appears at 658 to 662 (KLSKS). Residue lysine 661 participates in ATP binding.

This sequence belongs to the class-I aminoacyl-tRNA synthetase family.

Its subcellular location is the cytoplasm. It carries out the reaction tRNA(Leu) + L-leucine + ATP = L-leucyl-tRNA(Leu) + AMP + diphosphate. This Methanococcus aeolicus (strain ATCC BAA-1280 / DSM 17508 / OCM 812 / Nankai-3) protein is Leucine--tRNA ligase.